Here is a 529-residue protein sequence, read N- to C-terminus: Bifunctional purine biosynthesis protein PurH (529 aa).

The MGS-like domain maps to 1–148 (MQQRRPVRRA…KNHKDVAIVV (148 aa)). The residue at position 287 (Lys287) is an N6-acetyllysine.

Belongs to the PurH family.

The enzyme catalyses (6R)-10-formyltetrahydrofolate + 5-amino-1-(5-phospho-beta-D-ribosyl)imidazole-4-carboxamide = 5-formamido-1-(5-phospho-D-ribosyl)imidazole-4-carboxamide + (6S)-5,6,7,8-tetrahydrofolate. The catalysed reaction is IMP + H2O = 5-formamido-1-(5-phospho-D-ribosyl)imidazole-4-carboxamide. It functions in the pathway purine metabolism; IMP biosynthesis via de novo pathway; 5-formamido-1-(5-phospho-D-ribosyl)imidazole-4-carboxamide from 5-amino-1-(5-phospho-D-ribosyl)imidazole-4-carboxamide (10-formyl THF route): step 1/1. The protein operates within purine metabolism; IMP biosynthesis via de novo pathway; IMP from 5-formamido-1-(5-phospho-D-ribosyl)imidazole-4-carboxamide: step 1/1. This Escherichia coli O7:K1 (strain IAI39 / ExPEC) protein is Bifunctional purine biosynthesis protein PurH.